The following is a 408-amino-acid chain: Acetate kinase (408 aa).

Residue Asn7 participates in Mg(2+) binding. Residue Lys14 coordinates ATP. Arg98 serves as a coordination point for substrate. Asp155 acts as the Proton donor/acceptor in catalysis. Residues 214-218 (HLGNG), 289-291 (DLR), and 337-341 (GVGEN) contribute to the ATP site. Glu390 contributes to the Mg(2+) binding site.

It belongs to the acetokinase family. Homodimer. Requires Mg(2+) as cofactor. Mn(2+) is required as a cofactor.

Its subcellular location is the cytoplasm. The catalysed reaction is acetate + ATP = acetyl phosphate + ADP. It functions in the pathway metabolic intermediate biosynthesis; acetyl-CoA biosynthesis; acetyl-CoA from acetate: step 1/2. In terms of biological role, catalyzes the formation of acetyl phosphate from acetate and ATP. Can also catalyze the reverse reaction. The polypeptide is Acetate kinase (Cyanothece sp. (strain PCC 7425 / ATCC 29141)).